A 303-amino-acid polypeptide reads, in one-letter code: Protoheme IX farnesyltransferase (303 aa).

9 helical membrane passes run 25–45 (MGLVQGNLIPAFAGAWLAVVM), 54–74 (IPQILLMLLGSTLIMGGACAL), 104–124 (LLLLSFGMMLVGEICLFLLNI), 125–145 (PSGVLGLMGIVGYVSYYSIWS), 151–171 (WNTVIGSFPGAVPPLIGWVAI), 179–199 (AIALFLVVFCWQPIHFYALAI), 227–247 (FIWLIILLPVPLLLINLGVVF), 248–268 (VVLATLLNLGWIALGLTTFKK), and 280–300 (FIYSLNYLVIFFVLAVIVSLL).

The protein belongs to the UbiA prenyltransferase family. Protoheme IX farnesyltransferase subfamily. In terms of assembly, interacts with CtaA.

The protein localises to the cell membrane. It catalyses the reaction heme b + (2E,6E)-farnesyl diphosphate + H2O = Fe(II)-heme o + diphosphate. The protein operates within porphyrin-containing compound metabolism; heme O biosynthesis; heme O from protoheme: step 1/1. In terms of biological role, converts heme B (protoheme IX) to heme O by substitution of the vinyl group on carbon 2 of heme B porphyrin ring with a hydroxyethyl farnesyl side group. The sequence is that of Protoheme IX farnesyltransferase from Staphylococcus aureus (strain bovine RF122 / ET3-1).